An 880-amino-acid polypeptide reads, in one-letter code: Translation initiation factor IF-2 (880 aa).

2 stretches are compositionally biased toward basic and acidic residues: residues 180-194 and 202-228; these read QEAA…EAAK and LAEE…DHHI. A disordered region spans residues 180–289; it reads QEAATKRKQD…APESMAHGFN (110 aa). A compositionally biased stretch (basic residues) spans 249–262; the sequence is GRRARNKSNAKKRG. The region spanning 380–549 is the tr-type G domain; sequence SRAPVVTIMG…LLQAEVLELK (170 aa). Residues 389 to 396 are G1; sequence GHVDHGKT. GTP is bound at residue 389-396; that stretch reads GHVDHGKT. The segment at 414–418 is G2; it reads GITQH. The tract at residues 435-438 is G3; sequence DTPG. Residues 435-439 and 489-492 contribute to the GTP site; these read DTPGH and NKMD. The G4 stretch occupies residues 489 to 492; it reads NKMD. The segment at 525–527 is G5; it reads SAK.

The protein belongs to the TRAFAC class translation factor GTPase superfamily. Classic translation factor GTPase family. IF-2 subfamily.

The protein resides in the cytoplasm. Functionally, one of the essential components for the initiation of protein synthesis. Protects formylmethionyl-tRNA from spontaneous hydrolysis and promotes its binding to the 30S ribosomal subunits. Also involved in the hydrolysis of GTP during the formation of the 70S ribosomal complex. In Shewanella baltica (strain OS223), this protein is Translation initiation factor IF-2.